The following is a 209-amino-acid chain: Uracil phosphoribosyltransferase (209 aa).

Residues Arg79, Arg104, and 131–139 (DPMLATGNS) contribute to the 5-phospho-alpha-D-ribose 1-diphosphate site. Residues Ile194 and 199–201 (GDA) contribute to the uracil site. Asp200 contacts 5-phospho-alpha-D-ribose 1-diphosphate.

Belongs to the UPRTase family. Requires Mg(2+) as cofactor.

The catalysed reaction is UMP + diphosphate = 5-phospho-alpha-D-ribose 1-diphosphate + uracil. It functions in the pathway pyrimidine metabolism; UMP biosynthesis via salvage pathway; UMP from uracil: step 1/1. Its activity is regulated as follows. Allosterically activated by GTP. Its function is as follows. Catalyzes the conversion of uracil and 5-phospho-alpha-D-ribose 1-diphosphate (PRPP) to UMP and diphosphate. In Delftia acidovorans (strain DSM 14801 / SPH-1), this protein is Uracil phosphoribosyltransferase.